The chain runs to 441 residues: Matrix extracellular phosphoglycoprotein (441 aa).

An N-terminal signal peptide occupies residues 1–24; it reads MTPEGLMKMQAVSVGLLLFSMTWA. Asn82 carries N-linked (GlcNAc...) asparagine glycosylation. Residues 137–441 are disordered; the sequence is QSSPVKSKHT…SGSSSESHGD (305 aa). Basic residues predominate over residues 142 to 156; sequence KSKHTKHTRQTRRST. The tract at residues 178–200 is dentonin; sequence PDLLVRGDNDVPPFSGDGQHFMH. Positions 183–185 match the Cell attachment site motif; that stretch reads RGD. An O-linked (Xyl...) (chondroitin sulfate) serine glycan is attached at Ser192. Residues 211 to 223 show a composition bias toward polar residues; it reads PESSTSRPLSGSS. Residues 313 to 325 show a composition bias toward basic and acidic residues; sequence SREKVKGGVEHAG. Composition is skewed to polar residues over residues 349 to 358 and 391 to 405; these read GNQLTLTASQ and GQNN…SQRR. The ASARM motif; interaction with PHEX stretch occupies residues 424-441; it reads RDSSESSSSGSSSESHGD. The span at 428–441 shows a compositional bias: low complexity; it reads ESSSSGSSSESHGD.

This sequence belongs to the PF07175/osteoregulin family. In terms of assembly, interacts (via ASARM motif) with PHEX; the interaction is zinc-dependent. Phosphorylated on serine residues in the ASARM motif; the phosphorylation is important for the inhibition of bone mineralization. Post-translationally, cleaved by CTSB/cathepsin B; the cleavage is blocked by metalloprotease PHEX. Expressed in osteocytes (at protein level). Expressed by chondrocytes, specifically in the hypertrophic zone of the bone growth plate (at protein level). Expressed in osteoblasts in bone (at protein level). Expressed by osteoblasts within the metaphysis (at protein level). Expressed at low levels in white fat, brown fat, testes, brain and aorta. Expressed in the craniofacial complex (at protein level). Expressed in odontoblasts, ameloblasts and in predentin during tooth development (at protein level). Expressed in the kidney (at protein level). Expressed in osteocytes in mandibular condylar cartilage and tibial cartilage (at protein level). Expressed in salivary glands.

It is found in the secreted. It localises to the extracellular space. The protein localises to the extracellular matrix. Regulates renal phosphate and uric acid excretion. Regulates bone mineralization by osteoblasts and cartilage mineralization by chondrocytes. Regulates the mineralization of the extracellular matrix of the craniofacial complex, such as teeth, bone and cartilage. Increases dental pulp stem cell proliferation. This is Matrix extracellular phosphoglycoprotein from Mus musculus (Mouse).